The primary structure comprises 648 residues: RalA-binding protein 1 (648 aa).

The tract at residues 1 to 158 is disordered; that stretch reads MTECFLPPSS…KKSKDLTAAD (158 aa). Threonine 2 carries the N-acetylthreonine modification. Over residues 24–33 the composition is skewed to polar residues; sequence LTRTPSSEEI. Phosphoserine occurs at positions 29, 30, and 34. The residue at position 44 (threonine 44) is a Phosphothreonine. 2 positions are modified to phosphoserine: serine 48 and serine 62. Residues 52 to 68 are compositionally biased toward basic and acidic residues; it reads DVLHEPPDTVSDDDKDH. Position 69–74 (69–74) interacts with ATP; the sequence is GKKKGK. Positions 69 to 79 are enriched in basic residues; it reads GKKKGKFKKKE. Phosphoserine occurs at positions 92 and 93. A compositionally biased stretch (basic residues) spans 102–118; the sequence is KVKRSKGIHVFKKPSFS. The segment at 102–119 is nuclear localization signal; sequence KVKRSKGIHVFKKPSFSK. Positions 119 to 155 are enriched in basic and acidic residues; it reads KKKEKDFKIKEKPKEEKHKEEKHKEEKHKEKKSKDLT. The mediates association with membranes and could form transmembrane domains stretch occupies residues 154–219; sequence LTAADVVKQW…PAVFRECVDY (66 aa). The 189-residue stretch at 192–380 folds into the Rho-GAP domain; the sequence is VPLVDAVERT…VVLKQVTRPL (189 aa). The interval 403-499 is mediates interaction with RALA and RALB; the sequence is RRQEFLLNCL…LTEQEELLAM (97 aa). 418–425 contacts ATP; sequence GGIKDLSK. 2 positions are modified to phosphoserine: serine 461 and serine 463. A mediates interaction with REPS1 and REPS2 region spans residues 500 to 648; that stretch reads EQFLRRQIAS…PSKDRKETPI (149 aa). Disordered regions lie at residues 525 to 552 and 598 to 648; these read QSRQQHGRSETEEYSSDSESESEDEEEL and RAKS…ETPI. The span at 536 to 552 shows a compositional bias: acidic residues; the sequence is EEYSSDSESESEDEEEL. Residues 629-648 show a composition bias toward basic and acidic residues; the sequence is RVAKEQAKASPSKDRKETPI. At serine 638 the chain carries Phosphoserine.

Interacts with the GTP-bound form of RALA (via effector domain); during mitosis, recruits RALBP1 to the mitochondrion where it promotes DNM1L phosphorylation and mitochondrial fission. Interacts with DNM1L; mediates its mitotic kinase cyclin B-CDK1-mediated phosphorylation during mitosis to promote mitochondrial fission. Interacts with the mitotic kinase cyclin B-CDK1 during mitosis. Interacts with the GTP-bound form of RALB (via effector domain). Interacts with REPS1; the interaction is direct and does not affect RALA-binding nor GTPase activator activity of RALBP1. Interacts with REPS2; the interaction is direct and does not affect RALA-binding nor GTPase activator activity of RALBP1. Interacts with EPN1, NUMB and TFAP2A during interphase and mitosis. Interacts with AP2M1; as part of the AP2 complex. Interacts with CDC42. Interacts with RAC1. In terms of processing, tyrosine-phosphorylated upon stimulation of cells with EGF. Post-translationally, may undergo proteolytic cleavage to give peptides which reassemble to form a transporter complex. In terms of tissue distribution, ubiquitous. The highest level of expression was observed in ovaries and skeletal muscle, whereas the lowest was found in spleen, liver and peripheral blood leukocytes.

It is found in the cell membrane. It localises to the cytoplasm. The protein localises to the cytosol. Its subcellular location is the cytoskeleton. The protein resides in the spindle pole. It is found in the nucleus. It localises to the mitochondrion. The catalysed reaction is an S-substituted glutathione(in) + ATP + H2O = an S-substituted glutathione(out) + ADP + phosphate + H(+). It catalyses the reaction ATP + H2O + xenobioticSide 1 = ADP + phosphate + xenobioticSide 2.. It carries out the reaction leukotriene C4(in) + ATP + H2O = leukotriene C4(out) + ADP + phosphate + H(+). In terms of biological role, multifunctional protein that functions as a downstream effector of RALA and RALB. As a GTPase-activating protein/GAP can inactivate CDC42 and RAC1 by stimulating their GTPase activity. As part of the Ral signaling pathway, may also regulate ligand-dependent EGF and insulin receptors-mediated endocytosis. During mitosis, may act as a scaffold protein in the phosphorylation of EPSIN/EPN1 by the mitotic kinase cyclin B-CDK1, preventing endocytosis during that phase of the cell cycle. During mitosis, also controls mitochondrial fission as an effector of RALA. Recruited to mitochondrion by RALA, acts as a scaffold to foster the mitotic kinase cyclin B-CDK1-mediated phosphorylation and activation of DNM1L. Its function is as follows. Could also function as a primary ATP-dependent active transporter for glutathione conjugates of electrophiles. May also actively catalyze the efflux of a wide range of substrates including xenobiotics like doxorubicin (DOX) contributing to cell multidrug resistance. This Mus musculus (Mouse) protein is RalA-binding protein 1.